The chain runs to 343 residues: Probable dual-specificity RNA methyltransferase RlmN (343 aa).

Residue Glu91 is the Proton acceptor of the active site. Residues 97-326 (HPDRITACIS…AEIRREKGTD (230 aa)) enclose the Radical SAM core domain. Cys104 and Cys331 are oxidised to a cystine. Cys111, Cys115, and Cys118 together coordinate [4Fe-4S] cluster. Residues 158–159 (GE), Ser190, 213–215 (SLH), and Asn289 contribute to the S-adenosyl-L-methionine site. Cys331 (S-methylcysteine intermediate) is an active-site residue.

Belongs to the radical SAM superfamily. RlmN family. It depends on [4Fe-4S] cluster as a cofactor.

It localises to the cytoplasm. It catalyses the reaction adenosine(2503) in 23S rRNA + 2 reduced [2Fe-2S]-[ferredoxin] + 2 S-adenosyl-L-methionine = 2-methyladenosine(2503) in 23S rRNA + 5'-deoxyadenosine + L-methionine + 2 oxidized [2Fe-2S]-[ferredoxin] + S-adenosyl-L-homocysteine. The enzyme catalyses adenosine(37) in tRNA + 2 reduced [2Fe-2S]-[ferredoxin] + 2 S-adenosyl-L-methionine = 2-methyladenosine(37) in tRNA + 5'-deoxyadenosine + L-methionine + 2 oxidized [2Fe-2S]-[ferredoxin] + S-adenosyl-L-homocysteine. Functionally, specifically methylates position 2 of adenine 2503 in 23S rRNA and position 2 of adenine 37 in tRNAs. The protein is Probable dual-specificity RNA methyltransferase RlmN of Thermotoga maritima (strain ATCC 43589 / DSM 3109 / JCM 10099 / NBRC 100826 / MSB8).